Reading from the N-terminus, the 818-residue chain is MDTIKRMLWPKKEIFVGTFATGVERDTSVDIFQLVCRVVLRYMRTGKIENNTDSLGNFIVELLKTDCAAKWEWFMKRRRVGDYAKSLAIASIPVIPLLSYATMKKTVALRAFGNELSFNIRVPRPSVPKKGLLLRLAAGLALAPICALAMYATLPREKLSVFKLRTEARAHMEDEREATDCLVVEPARELKGKDGEDLLTGSRMTKVIASTGRPRRRPYAAKIAQVARAKVGYLKNTPENRLIYQRVMIEIMDKDCVRYVDRDVILPLAIGCCFVYPDGVEESAALWGSDESLGVKXGGLVRLPGVVTQTNRDIPSGVLLPQEVLEVRAGPPNAKDRNIFMVAGCPSQARFLVHNHCLKNLKRGLVERVFCVERNGQLTRTPQPTKGAFGRLSPFRKAVCEKVGVAHRLGYDGFLSYYSGAKLRTYTRAVESLHITPVSERDSHLTTFVKAEKISTAKGDPAPRVIQPRNPRYNVELGRYLRHMESKLMKAVDGVFGETTCIKGYTADEVGQIFRDKWDRFNKPVAIGLDASRFDQHCSVEALQFEHGFYRAMYPGNKLLSKLLDWQLHNKGKGYVPDGTITYRKEGCRMSGDINTSLGNYLLMCAMIYGYMRHLGINEYSLANCGDDCVLIVERRNLKQIQGTLPEYFLNLGYTMKVEPPVFQLEEVEFCQAHPVQFQGGWKMVRNVRTAMSKDVHCVNNIRDLATRRAWSNAQHHGGVALTSGIPVVEKFYSRFTLYEVPKKHQRIDTVTNVHKWRGSGGDYVVTPEARASFWAAFGLTGDEQLALEDRLDRWEMDLFGEEGVDAHEPSILDSAVA.

A RdRp catalytic domain is found at 524-641 (PVAIGLDASR…IVERRNLKQI (118 aa)).

This sequence belongs to the tombusviridae RNA polymerase family.

The enzyme catalyses RNA(n) + a ribonucleoside 5'-triphosphate = RNA(n+1) + diphosphate. Functionally, RNA-dependent RNA polymerase that plays an essential role in the virus replication. The sequence is that of RNA-directed RNA polymerase from Cucumis sativus (Cucumber).